An 87-amino-acid polypeptide reads, in one-letter code: MKTKLNELLEFPTPFTYKVMGQALPELVDQVVEVVQRHAPGDYSPTVKPSSKGNYHSVSITINATHIEQVETLYEELGNIDIVRMVL.

Belongs to the UPF0250 family.

This chain is UPF0250 protein CKO_02527, found in Citrobacter koseri (strain ATCC BAA-895 / CDC 4225-83 / SGSC4696).